The primary structure comprises 1009 residues: Protein naked cuticle (1009 aa).

Composition is skewed to polar residues over residues 68 to 83 (IITT…ASNK) and 121 to 130 (LPQDMSSSGS). The disordered stretch occupies residues 68–166 (IITTPPGNAS…QQQTAAAATG (99 aa)). Positions 152-166 (QQQQQQQQTAAAATG) are enriched in low complexity. Residues 206-282 (EFTCDVSVEG…TVSPEGKSKS (77 aa)) form an interaction with dsh region. Residues 217–253 (KSSQPLQFSFTFYDLDGHHGKITKDDIVGIVYTIYES) enclose the EF-hand domain. Disordered regions lie at residues 328–433 (MSKQ…QQQL), 456–479 (AGNE…RQQD), and 515–580 (GNDS…QQQR). Positions 349–359 (RRQHRYRPRKL) are enriched in basic residues. The segment covering 370–387 (NSEKEKERERERERESHA) has biased composition (basic and acidic residues). The segment covering 403–414 (KSHHHHHHHGRY) has biased composition (basic residues). Polar residues predominate over residues 515–525 (GNDSGNWQNRH). Composition is skewed to low complexity over residues 526-535 (LQQSLQQQPQ) and 570-580 (HQQLQQQQQQR). The tract at residues 584 to 613 (ECWKSALNRNDLISIIRESMEKNRLCFQLN) is required for nuclear localization and inhibition of Wnt signaling. 4 disordered regions span residues 619-662 (NVSP…SPLS), 773-799 (SAAH…HNQK), 835-899 (LQQK…SAGS), and 955-982 (TESG…LDTS). 2 stretches are compositionally biased toward low complexity: residues 624 to 638 (RQPA…QRQR) and 653 to 662 (SPAAPQSPLS). The span at 843 to 857 (RRHRHKQQQQQHHHQ) shows a compositional bias: basic residues. The span at 858–875 (QQQQQQQQQNQQQQQQQQ) shows a compositional bias: low complexity. The segment covering 968 to 979 (EADEGQEQEVEL) has biased composition (acidic residues).

The protein belongs to the NKD family. Interacts with dsh.

It is found in the cell membrane. The protein resides in the cytoplasm. The protein localises to the nucleus. Cell autonomous antagonist of the canonical Wnt signaling pathway. May activate a second Wnt signaling pathway that controls planar cell polarity. Required for neuroblast specification. This chain is Protein naked cuticle, found in Drosophila pseudoobscura pseudoobscura (Fruit fly).